Reading from the N-terminus, the 512-residue chain is Sucrose-6-phosphate hydrolase (512 aa).

Residues 40 to 43 (WMND), Gln59, Trp67, 102 to 103 (FS), 165 to 166 (RD), Glu229, and Trp311 contribute to the substrate site. Residue Asp43 is part of the active site.

This sequence belongs to the glycosyl hydrolase 32 family.

The protein resides in the cytoplasm. It carries out the reaction Hydrolysis of terminal non-reducing beta-D-fructofuranoside residues in beta-D-fructofuranosides.. It functions in the pathway glycan biosynthesis; sucrose metabolism. The polypeptide is Sucrose-6-phosphate hydrolase (sacA) (Zymomonas mobilis subsp. mobilis (strain ATCC 31821 / ZM4 / CP4)).